Reading from the N-terminus, the 98-residue chain is MALTKAEMAEHLFETLGINKRVAKEMVESFFEEIRGALESGEQVKLSGFGNFDLRDKNQRPGRNPKTGEDIPISARRVVTFRPGQKLKTRVEASNAGK.

Positions 49–71 (FGNFDLRDKNQRPGRNPKTGEDI) are disordered.

It belongs to the bacterial histone-like protein family. In terms of assembly, heterodimer of an alpha and a beta chain.

Functionally, this protein is one of the two subunits of integration host factor, a specific DNA-binding protein that functions in genetic recombination as well as in transcriptional and translational control. The polypeptide is Integration host factor subunit alpha (Shewanella sp. (strain MR-4)).